The primary structure comprises 218 residues: Protein N-lysine methyltransferase METTL21A (218 aa).

Residues tryptophan 47, 73-75 (GAG), aspartate 94, tryptophan 125, and alanine 143 contribute to the S-adenosyl-L-methionine site.

Belongs to the methyltransferase superfamily. METTL21 family. Interacts with heat shock protein 70 family members; at least some of these proteins are methylation substrates.

It localises to the cytoplasm. The catalysed reaction is L-lysyl-[protein] + 3 S-adenosyl-L-methionine = N(6),N(6),N(6)-trimethyl-L-lysyl-[protein] + 3 S-adenosyl-L-homocysteine + 3 H(+). Protein-lysine methyltransferase that selectively trimethylates residues in heat shock protein 70 (HSP70) family members. Contributes to the in vivo trimethylation of Lys residues in HSPA1 and HSPA8. In vitro methylates 'Lys-561' in HSPA1, 'Lys-564' in HSPA2, 'Lys-585' in HSPA5, 'Lys-563' in HSPA6 and 'Lys-561' in HSPA8. The polypeptide is Protein N-lysine methyltransferase METTL21A (METTL21A) (Homo sapiens (Human)).